We begin with the raw amino-acid sequence, 210 residues long: Ribosomal RNA small subunit methyltransferase G (210 aa).

S-adenosyl-L-methionine-binding positions include G76, L81, 127-128 (VE), and R142.

This sequence belongs to the methyltransferase superfamily. RNA methyltransferase RsmG family.

It localises to the cytoplasm. The catalysed reaction is guanosine(527) in 16S rRNA + S-adenosyl-L-methionine = N(7)-methylguanosine(527) in 16S rRNA + S-adenosyl-L-homocysteine. Specifically methylates the N7 position of guanine in position 527 of 16S rRNA. The sequence is that of Ribosomal RNA small subunit methyltransferase G from Vibrio cholerae serotype O1 (strain ATCC 39315 / El Tor Inaba N16961).